The primary structure comprises 280 residues: Putative pyruvate, phosphate dikinase regulatory protein (280 aa).

152 to 159 (GISRTSKT) contacts ADP.

It belongs to the pyruvate, phosphate/water dikinase regulatory protein family. PDRP subfamily.

The enzyme catalyses N(tele)-phospho-L-histidyl/L-threonyl-[pyruvate, phosphate dikinase] + ADP = N(tele)-phospho-L-histidyl/O-phospho-L-threonyl-[pyruvate, phosphate dikinase] + AMP + H(+). It carries out the reaction N(tele)-phospho-L-histidyl/O-phospho-L-threonyl-[pyruvate, phosphate dikinase] + phosphate + H(+) = N(tele)-phospho-L-histidyl/L-threonyl-[pyruvate, phosphate dikinase] + diphosphate. Its function is as follows. Bifunctional serine/threonine kinase and phosphorylase involved in the regulation of the pyruvate, phosphate dikinase (PPDK) by catalyzing its phosphorylation/dephosphorylation. This chain is Putative pyruvate, phosphate dikinase regulatory protein, found in Clostridioides difficile (strain 630) (Peptoclostridium difficile).